A 665-amino-acid polypeptide reads, in one-letter code: Long chain acyl-CoA synthetase 2 (665 aa).

228-239 (IMYTSGTTGEPK) contacts ATP. The fatty acid-binding stretch occupies residues 496 to 520 (DGWFHTGDIGEWQEDGSMKIIDRKK).

Belongs to the ATP-dependent AMP-binding enzyme family. Mg(2+) is required as a cofactor. In terms of tissue distribution, expressed along the entire length of the stem, but expression was not entirely epidermal specific, with some expression found in internal cell layers as well. Was expressed in leave epidermal cells, flowers (sepals, petals, stamens, filaments and carpel), siliques and developing seeds. In roots, expression was detected in an internal cell layer, probably the endodermal layer.

The protein resides in the endoplasmic reticulum. It catalyses the reaction a long-chain fatty acid + ATP + CoA = a long-chain fatty acyl-CoA + AMP + diphosphate. It participates in lipid metabolism; fatty acid metabolism. Activation of long-chain fatty acids for both synthesis of cellular lipids, and degradation via beta-oxidation. Acts in the cutin pathway. Preferentially uses palmitate, palmitoleate, oleate and linoleate. Required for repression of lateral root formation through its role in cutin biosynthesis and subsequent aerial tissues permeability. In Arabidopsis thaliana (Mouse-ear cress), this protein is Long chain acyl-CoA synthetase 2 (LACS2).